The chain runs to 374 residues: uncharacterized protein (374 aa).

Positions 1-46 are disordered; that stretch reads MVNEEEKDLTAEGDSNNTGVSPDSIKNKTLDFYPKEKTTERKTRSR. Basic and acidic residues predominate over residues 25–46; it reads IKNKTLDFYPKEKTTERKTRSR. The next 6 helical transmembrane spans lie at 70-90, 127-147, 153-173, 199-219, 242-262, and 312-332; these read YAYI…FIAA, WVFY…KIGI, TIVY…IPVI, IWLF…YGLV, ISIA…MLAI, and YFFG…AITI.

This sequence to M.genitalium MG432 and MG443.

The protein resides in the cell membrane. This is an uncharacterized protein from Spiroplasma citri.